The sequence spans 199 residues: Probable GTP-binding protein EngB (199 aa).

An EngB-type G domain is found at 28–199; that stretch reads DLPEVALAGR…EAWDTILAEL (172 aa). GTP contacts are provided by residues 36–43, 63–67, 81–84, 148–151, and 180–182; these read GRSNVGKS, GKTQL, DVPG, TKAD, and FSS. Positions 43 and 65 each coordinate Mg(2+).

Belongs to the TRAFAC class TrmE-Era-EngA-EngB-Septin-like GTPase superfamily. EngB GTPase family. It depends on Mg(2+) as a cofactor.

Necessary for normal cell division and for the maintenance of normal septation. The chain is Probable GTP-binding protein EngB from Streptococcus thermophilus (strain CNRZ 1066).